The sequence spans 493 residues: MTTLTDLTLAEARDALLNKDFSAVELVKAQLAEIEQARALNAFIKETPEKALAMAEASDARIARGEAGPLEGVPLGIKDLYCTEGVETTAASHILEGFKPAYESTVSANLWRDGAVMLGKLNLDEFAMGSSNETSYFGPVVSPWRRKGSDARIVPGGSSGGSAAAVAARLCFGATATDTGGSIRQPAAFTGTVGIKPTYGRCSRWGIVAFASSLDQAGPIARTVRDAAILMRSMAGHDPKDTTSVDAPVPDYEATLSRGVKGMKIGIPKEYRIEGVPAEIDALWGQGVEWLKDAGATIVDISLPHTRYALPAYYIVAPAEASSNLARYDGVRYGLRVPGKDIVGMYEATRAAGFGKEVRRRIMIGAYVLSAGYYDAYYVRAQKIRTLIKQDFDRAYADGVDAILTPATPSAAFGFGEKGSGDPVEMYLNDVFTVTVNMAGLPGLAVPAGVSAEGLPLGLQLIGRPFDEETLFALASVIEKAAPKIAPPPKWWA.

Residues Lys-78 and Ser-158 each act as charge relay system in the active site. Catalysis depends on Ser-182, which acts as the Acyl-ester intermediate.

This sequence belongs to the amidase family. GatA subfamily. In terms of assembly, heterotrimer of A, B and C subunits.

The enzyme catalyses L-glutamyl-tRNA(Gln) + L-glutamine + ATP + H2O = L-glutaminyl-tRNA(Gln) + L-glutamate + ADP + phosphate + H(+). Its function is as follows. Allows the formation of correctly charged Gln-tRNA(Gln) through the transamidation of misacylated Glu-tRNA(Gln) in organisms which lack glutaminyl-tRNA synthetase. The reaction takes place in the presence of glutamine and ATP through an activated gamma-phospho-Glu-tRNA(Gln). This is Glutamyl-tRNA(Gln) amidotransferase subunit A from Methylocella silvestris (strain DSM 15510 / CIP 108128 / LMG 27833 / NCIMB 13906 / BL2).